Here is a 141-residue protein sequence, read N- to C-terminus: Nucleoside diphosphate kinase (141 aa).

Residues K11, F59, R87, T93, R104, and N114 each contribute to the ATP site. Catalysis depends on H117, which acts as the Pros-phosphohistidine intermediate.

This sequence belongs to the NDK family. In terms of assembly, homotetramer. The cofactor is Mg(2+).

It localises to the cytoplasm. It carries out the reaction a 2'-deoxyribonucleoside 5'-diphosphate + ATP = a 2'-deoxyribonucleoside 5'-triphosphate + ADP. The catalysed reaction is a ribonucleoside 5'-diphosphate + ATP = a ribonucleoside 5'-triphosphate + ADP. Major role in the synthesis of nucleoside triphosphates other than ATP. The ATP gamma phosphate is transferred to the NDP beta phosphate via a ping-pong mechanism, using a phosphorylated active-site intermediate. The protein is Nucleoside diphosphate kinase of Neisseria meningitidis serogroup A / serotype 4A (strain DSM 15465 / Z2491).